Reading from the N-terminus, the 468-residue chain is Maltose fermentation regulatory protein MAL33 (468 aa).

The zn(2)-C6 fungal-type DNA-binding region spans 8–34 (CDYCRVRRVKCDGKKPCSRCIEHNFDC). Residues 41–49 (KKRGSKPIG) carry the Nuclear localization signal motif.

The protein belongs to the MAL13 family.

Its subcellular location is the nucleus. In terms of biological role, regulates the coordinate transcription of structural MAL3S (maltase) and MAL3T (maltose permease) genes. This chain is Maltose fermentation regulatory protein MAL33 (MAL33), found in Saccharomyces cerevisiae (strain ATCC 204508 / S288c) (Baker's yeast).